Consider the following 792-residue polypeptide: Endonuclease MutS2 (792 aa).

An ATP-binding site is contributed by 335-342 (GPNTGGKT). The 76-residue stretch at 717-792 (VDLRGLNLEE…GAGVTIVKLK (76 aa)) folds into the Smr domain.

This sequence belongs to the DNA mismatch repair MutS family. MutS2 subfamily. As to quaternary structure, homodimer. Binds to stalled ribosomes, contacting rRNA.

Endonuclease that is involved in the suppression of homologous recombination and thus may have a key role in the control of bacterial genetic diversity. Its function is as follows. Acts as a ribosome collision sensor, splitting the ribosome into its 2 subunits. Detects stalled/collided 70S ribosomes which it binds and splits by an ATP-hydrolysis driven conformational change. Acts upstream of the ribosome quality control system (RQC), a ribosome-associated complex that mediates the extraction of incompletely synthesized nascent chains from stalled ribosomes and their subsequent degradation. Probably generates substrates for RQC. This Clostridioides difficile (strain 630) (Peptoclostridium difficile) protein is Endonuclease MutS2.